We begin with the raw amino-acid sequence, 518 residues long: Calcium/calmodulin-dependent protein kinase kinase cmkC (518 aa).

The interval 1-72 is disordered; it reads MANEGAGSLQ…SEYTLSQDDG (72 aa). Composition is skewed to polar residues over residues 8 to 17 and 60 to 71; these read SLQQDASPGS and NARSEYTLSQDD. A Protein kinase domain is found at 81–376; sequence YVIKQEIGRG…MDELREHPWV (296 aa). ATP-binding positions include 87–95 and Lys-109; that span reads IGRGSFGAV. Residues 119–149 form a disordered region; that stretch reads RAKSQLLRQSRGPKRSSRWPKLPFSSPGTGT. The active-site Proton acceptor is the Asp-243. The segment at 404 to 409 is autoinhibitory domain; it reads FSAITK. The tract at residues 407-431 is calmodulin-binding; it reads ITKNFGHVLAVMKAAKKFKSLQGPT. A disordered region spans residues 453–472; sequence PTQMDPEESVSLPSPLPYKK.

This sequence belongs to the protein kinase superfamily. Ser/Thr protein kinase family.

The enzyme catalyses L-seryl-[protein] + ATP = O-phospho-L-seryl-[protein] + ADP + H(+). It carries out the reaction L-threonyl-[protein] + ATP = O-phospho-L-threonyl-[protein] + ADP + H(+). With respect to regulation, activated by Ca(2+)/calmodulin. Binding of calmodulin may relieve intrasteric autoinhibition. Its function is as follows. Calcium/calmodulin-dependent protein kinase that operates in the calcium-triggered CaMKK-CaMK1 signaling cascade. Phosphorylates and activates cmkB in vitro. Required in G1-phase of the cell cycle for proper timing of the initial nuclear division after germination as well as for subsequent nuclear division cycles. Required for the normal temporal regulation of nimX activity. The chain is Calcium/calmodulin-dependent protein kinase kinase cmkC from Emericella nidulans (Aspergillus nidulans).